The sequence spans 332 residues: 3'(2'),5'-bisphosphate nucleotidase (332 aa).

The active-site Proton acceptor is aspartate 49. Positions 73, 129, 131, and 132 each coordinate Mg(2+). Threonine 134 serves as the catalytic Proton acceptor. The adenosine 3',5'-bisphosphate site is built by threonine 134, serine 245, lysine 248, arginine 262, and aspartate 274. AMP-binding residues include serine 245, lysine 248, arginine 262, and aspartate 274. Position 274 (aspartate 274) interacts with Mg(2+).

This sequence belongs to the inositol monophosphatase superfamily. Mg(2+) is required as a cofactor.

It carries out the reaction 3'-phosphoadenylyl sulfate + H2O = adenosine 5'-phosphosulfate + phosphate. The enzyme catalyses adenosine 3',5'-bisphosphate + H2O = AMP + phosphate. It catalyses the reaction adenosine 2',5'-bisphosphate + H2O = AMP + phosphate. The catalysed reaction is 1D-myo-inositol 1,4-bisphosphate + H2O = 1D-myo-inositol 4-phosphate + phosphate. It carries out the reaction 1D-myo-inositol 1,3,4-trisphosphate + H2O = 1D-myo-inositol 3,4-bisphosphate + phosphate. Its function is as follows. Phosphatase that converts adenosine 3'-phosphate 5'-phosphosulfate (PAPS) to adenosine 5'-phosphosulfate (APS) and 3'(2')-phosphoadenosine 5'-phosphate (PAP) to AMP. Is also able to hydrolyze inositol 1,4-bisphosphate and inositol 1,3,4-trisphosphate. The chain is 3'(2'),5'-bisphosphate nucleotidase from Dictyostelium discoideum (Social amoeba).